We begin with the raw amino-acid sequence, 284 residues long: Acetylglutamate kinase (284 aa).

Residues 64–65 (GG), Arg86, and Asn179 each bind substrate.

Belongs to the acetylglutamate kinase family. ArgB subfamily.

It is found in the cytoplasm. The catalysed reaction is N-acetyl-L-glutamate + ATP = N-acetyl-L-glutamyl 5-phosphate + ADP. The protein operates within amino-acid biosynthesis; L-arginine biosynthesis; N(2)-acetyl-L-ornithine from L-glutamate: step 2/4. In terms of biological role, catalyzes the ATP-dependent phosphorylation of N-acetyl-L-glutamate. This is Acetylglutamate kinase from Prochlorococcus marinus subsp. pastoris (strain CCMP1986 / NIES-2087 / MED4).